The sequence spans 1305 residues: ABC transporter FPSE_09185 (1305 aa).

N-linked (GlcNAc...) asparagine glycosylation is present at N28. 6 consecutive transmembrane segments (helical) span residues 44–64 (FCVYVVGALASIGVGVTMPLM), 99–119 (LYIVGLFLGRWLLNSINKFCF), 172–192 (RLGTFVTYVSTIIAAIAVAFT), 199–219 (IVSASLLVYIAIIIAIVVPIY), 277–297 (IIGAQTGLVFFGIFGVFGLAF), and 312–332 (VGVVIIVLTSVMLILFAFSYL). The ABC transmembrane type-1 1 domain maps to 48–348 (VVGALASIGV…ISQAMVAATE (301 aa)). Residues 372 to 663 (LIFKDVTFEY…ENGVYYSLVE (292 aa)) enclose the ABC transporter 1 domain. 407–414 (GPSGSGKS) provides a ligand contact to ATP. The disordered stretch occupies residues 434-454 (EAATPRSSKEGERDNHDERKY). Basic and acidic residues predominate over residues 440–454 (SSKEGERDNHDERKY). N-linked (GlcNAc...) asparagine glycans are attached at residues N468, N507, and N525. Transmembrane regions (helical) follow at residues 737–757 (FLLITIASMGVGAATPLQAWL), 780–800 (GFMWLALAGGVGVAYFFQCWI), 851–873 (GVFGLNLASATSSVFTIVGCLII), 877–899 (FGWKLGLVGLCVTVPIMMVSGFW), 964–984 (AVIFGFAESATLGCQALILWY), and 999–1019 (FMVSYMAIINGVEYAGQILGV). The 288-residue stretch at 738 to 1025 (LLITIASMGV…ILGVAPSAAQ (288 aa)) folds into the ABC transmembrane type-1 2 domain. Positions 1038 to 1057 (DSNRSSQEAEKSGPTVEDTD) are disordered. N-linked (GlcNAc...) asparagine glycans are attached at residues N1040, N1066, and N1075. Residues 1062–1300 (IELCNVSFKY…RGIYWDMCQT (239 aa)) enclose the ABC transporter 2 domain. Position 1096–1103 (1096–1103 (GPSGCGKT)) interacts with ATP. A glycan (N-linked (GlcNAc...) asparagine) is linked at N1125.

This sequence belongs to the ABC transporter superfamily. ABCB family. Multidrug resistance exporter (TC 3.A.1.201) subfamily.

The protein resides in the membrane. Its function is as follows. ABC transporter; part of the gene cluster that mediates the biosynthesis of the lipopeptides W493 A and B. W493 A and B consist of six amino acid residues D-allo-thr, L-Ala, D-Ala, L-Gln, D-Tyr, and L-Val/L-Ile linked to a 3-hydroxy-4-methyltetradecanoic acid polyketide chain. May be involved in excretion or internal transport of W493 A and B. The chain is ABC transporter FPSE_09185 from Fusarium pseudograminearum (strain CS3096) (Wheat and barley crown-rot fungus).